The sequence spans 491 residues: Synaptotagmin-9 (491 aa).

Over 1–52 (MPGARDALCHQALQLLAELCARGALEHDSCQDFIYHLRDRARPRLRDPDISV) the chain is Vesicular. The cysteine motif stretch occupies residues 9-31 (CHQALQLLAELCARGALEHDSCQ). The chain crosses the membrane as a helical span at residues 53 to 73 (SLLTLVVTACGLALFGVSLFV). The Cytoplasmic segment spans residues 74–491 (SWKLCWVPWR…AHWHSLMEKR (418 aa)). Polar residues predominate over residues 91–104 (SKDNNQEPLNYTDT). The segment at 91–147 (SKDNNQEPLNYTDTETNEQENSEDFLDPPTPCPDSSMKISHTSPDIPLSTQPGGQEN) is disordered. Residues 105–116 (ETNEQENSEDFL) show a composition bias toward acidic residues. The span at 127–144 (MKISHTSPDIPLSTQPGG) shows a compositional bias: polar residues. Position 177 is a phosphoserine (S177). C2 domains are found at residues 220–341 (ACGK…ILWK) and 352–485 (DLGE…AHWH). Ca(2+) contacts are provided by D251, D257, D309, F310, D311, S314, D317, D383, D389, D443, and D445.

This sequence belongs to the synaptotagmin family. Homodimer; disulfide-linked via the cysteine motif. Can also form heterodimers with SYT3, SYT6, SYT7 and SYT10. Interacts with DNAJC5 and SNAP25, but not with HSC70. The interaction with DNAJC5 is stimulated tenfold in presence of calcium while the interaction with SNAP25 is inhibited. Requires Ca(2+) as cofactor.

It localises to the cytoplasmic vesicle. The protein resides in the secretory vesicle. Its subcellular location is the synaptic vesicle membrane. In terms of biological role, may be involved in Ca(2+)-dependent exocytosis of secretory vesicles through Ca(2+) and phospholipid binding to the C2 domain or may serve as Ca(2+) sensors in the process of vesicular trafficking and exocytosis. The sequence is that of Synaptotagmin-9 (Syt9) from Mus musculus (Mouse).